Here is a 341-residue protein sequence, read N- to C-terminus: Protein pelota homolog (341 aa).

Belongs to the eukaryotic release factor 1 family. Pelota subfamily. In terms of assembly, monomer. The cofactor is a divalent metal cation.

The protein localises to the cytoplasm. May function in recognizing stalled ribosomes, interact with stem-loop structures in stalled mRNA molecules, and effect endonucleolytic cleavage of the mRNA. May play a role in the release non-functional ribosomes and degradation of damaged mRNAs. Has endoribonuclease activity. The protein is Protein pelota homolog of Sulfurisphaera tokodaii (strain DSM 16993 / JCM 10545 / NBRC 100140 / 7) (Sulfolobus tokodaii).